A 503-amino-acid polypeptide reads, in one-letter code: Probable cytosol aminopeptidase (503 aa).

Mn(2+)-binding residues include Lys-274 and Asp-279. The active site involves Lys-286. Residues Asp-297, Asp-356, and Glu-358 each contribute to the Mn(2+) site. Residue Arg-360 is part of the active site.

The protein belongs to the peptidase M17 family. Requires Mn(2+) as cofactor.

The protein localises to the cytoplasm. It catalyses the reaction Release of an N-terminal amino acid, Xaa-|-Yaa-, in which Xaa is preferably Leu, but may be other amino acids including Pro although not Arg or Lys, and Yaa may be Pro. Amino acid amides and methyl esters are also readily hydrolyzed, but rates on arylamides are exceedingly low.. The enzyme catalyses Release of an N-terminal amino acid, preferentially leucine, but not glutamic or aspartic acids.. In terms of biological role, presumably involved in the processing and regular turnover of intracellular proteins. Catalyzes the removal of unsubstituted N-terminal amino acids from various peptides. This chain is Probable cytosol aminopeptidase, found in Burkholderia orbicola (strain MC0-3).